The sequence spans 258 residues: Isoprenyl transferase 2 (258 aa).

The active site involves aspartate 35. A Mg(2+)-binding site is contributed by aspartate 35. Residues 36 to 39 (GNRR), tryptophan 40, arginine 50, and 81 to 83 (SDD) contribute to the substrate site. The Proton acceptor role is filled by asparagine 84. Residues arginine 87, arginine 207, and 213-215 (RLS) each bind substrate. Glutamate 226 contacts Mg(2+).

This sequence belongs to the UPP synthase family. Homodimer. Mg(2+) is required as a cofactor.

Functionally, catalyzes the condensation of isopentenyl diphosphate (IPP) with allylic pyrophosphates generating different type of terpenoids. This Streptomyces coelicolor (strain ATCC BAA-471 / A3(2) / M145) protein is Isoprenyl transferase 2.